The sequence spans 356 residues: MTAEPTVAARPQQIDALRTLIRLGSLHTPMVVRTAATLRLVDHILAGARTVKALAARTDTRPEALLRLIRHLVAIGLLEEDAPGEFAPTEVGKLLADDHPAAQRAWHDLTQAVARADISFTRLPEAIRSGRPTYESVYGKPFYEDLAGRPDLRASFDSLLACDQDVAFDAPAAAHDWTNVRHVLDVGGGKGGFAAAIARRAPHVSATVLEMAGTVDTARSYLRDAGLSDRVDVVEGDFFEPLPRRADAIILSFVLLNWPDHDAVRILTRCAEALEPGGRILIHERDDLHENSFNEQFTELDLRMLVFLGGALRTREKWDGLAASAGLVVEEVRQLPSPTIPYDLSLLVLAPASTGA.

Arginine 153 provides a ligand contact to S-adenosyl-L-methionine. Aspartate 163 lines the substrate pocket. Residues glycine 187, glutamate 210, 237-238, and serine 252 contribute to the S-adenosyl-L-methionine site; that span reads DF. Positions 257 and 303 each coordinate substrate.

This sequence belongs to the class I-like SAM-binding methyltransferase superfamily. Cation-independent O-methyltransferase family. Homodimer and homotetramer in equilibrium.

The enzyme catalyses carminomycin + S-adenosyl-L-methionine = daunorubicin + S-adenosyl-L-homocysteine + H(+). It participates in antibiotic biosynthesis; daunorubicin biosynthesis. It functions in the pathway antibiotic biosynthesis; carminomycin biosynthesis. Its activity is regulated as follows. Strongly inhibited by S-adenosyl-L-homocysteine and weakly by adenine and methionine. Its function is as follows. Involved in the biosynthesis of the anthracyclines carminomycin and daunorubicin (daunomycin) which are aromatic polyketide antibiotics that exhibit high cytotoxicity and are widely applied in the chemotherapy of a variety of cancers. In vivo, catalyzes the transfer of a methyl group from S-adenosyl-L-methionine to the 4-O-position of carminomycin to form daunorubicin. In vitro, it also methylates the anthracyclines rhodomycin D (10-carbomethoxy-13-deoxycarminomycin), 10-carboxy-13-deoxycarminomycin, 13-deoxy-carminomycin and 13-dihydrocarminomycin at the 4-hydroxyl position. In Streptomyces sp. (strain C5), this protein is Carminomycin 4-O-methyltransferase DauK (dauK).